Consider the following 180-residue polypeptide: Oligoribonuclease (180 aa).

The Exonuclease domain maps to 7–170; that stretch reads LIWIDLEMTG…DDIRESIAEL (164 aa). Tyrosine 128 is a catalytic residue.

This sequence belongs to the oligoribonuclease family.

The protein localises to the cytoplasm. In terms of biological role, 3'-to-5' exoribonuclease specific for small oligoribonucleotides. In Pseudomonas fluorescens (strain Pf0-1), this protein is Oligoribonuclease.